The chain runs to 464 residues: Antithrombin-III (464 aa).

A signal peptide spans 1-32 (MYSNVIGTVTSGKRKVYLLSLLLIGFWDCVTC). Disulfide bonds link Cys40/Cys160 and Cys53/Cys127. Phosphothreonine; by FAM20C is present on Thr63. Phosphoserine; by FAM20C is present on Ser68. Trp81 serves as a coordination point for heparin. Asn128 carries an N-linked (GlcNAc...) asparagine glycan. Arg161 contributes to the heparin binding site. Asn167 carries N-linked (GlcNAc...) asparagine glycosylation. Residue Arg177 coordinates heparin. Asn187 carries an N-linked (GlcNAc...) (complex) asparagine glycan. A glycan (N-linked (GlcNAc...) asparagine) is linked at Asn224. A disulfide bridge connects residues Cys279 and Cys462.

Belongs to the serpin family. As to quaternary structure, forms protease inhibiting heterodimer with TMPRSS7. Post-translationally, phosphorylated by FAM20C in the extracellular medium. As to expression, found in plasma.

Its subcellular location is the secreted. The protein localises to the extracellular space. Most important serine protease inhibitor in plasma that regulates the blood coagulation cascade. AT-III inhibits thrombin, matriptase-3/TMPRSS7, as well as factors IXa, Xa and XIa. Its inhibitory activity is greatly enhanced in the presence of heparin. This chain is Antithrombin-III (SERPINC1), found in Homo sapiens (Human).